We begin with the raw amino-acid sequence, 523 residues long: Probable E3 ubiquitin-protein ligase ZFP1 (523 aa).

Positions 18–28 (EQGHSHIHSES) are enriched in basic and acidic residues. The tract at residues 18–43 (EQGHSHIHSESFNRTGNDSSDQGAQH) is disordered. A compositionally biased stretch (polar residues) spans 29-40 (FNRTGNDSSDQG). Residues 471–512 (CIICQEEYQVKECIGTLDCGHRYHEDCIKQWLMVKNLCPICK) form an RING-type; atypical zinc finger.

It belongs to the RING-type zinc finger family. Interacts with DJA6.

It carries out the reaction S-ubiquitinyl-[E2 ubiquitin-conjugating enzyme]-L-cysteine + [acceptor protein]-L-lysine = [E2 ubiquitin-conjugating enzyme]-L-cysteine + N(6)-ubiquitinyl-[acceptor protein]-L-lysine.. The protein operates within protein modification; protein ubiquitination. Its function is as follows. Probable E3 ubiquitin-protein ligase. In Oryza sativa subsp. japonica (Rice), this protein is Probable E3 ubiquitin-protein ligase ZFP1.